We begin with the raw amino-acid sequence, 520 residues long: Maturase K (520 aa).

It belongs to the intron maturase 2 family. MatK subfamily.

The protein resides in the plastid. Its subcellular location is the chloroplast. Its function is as follows. Usually encoded in the trnK tRNA gene intron. Probably assists in splicing its own and other chloroplast group II introns. This Aspidistra elatior (Cast-iron plant) protein is Maturase K.